Here is a 68-residue protein sequence, read N- to C-terminus: Large ribosomal subunit protein bL35 (68 aa).

Positions 1-25 are enriched in basic residues; sequence MGTKIKTHKGTKKRFRLSAKGKAMH. Positions 1–43 are disordered; sequence MGTKIKTHKGTKKRFRLSAKGKAMHRQSGTSHLAKGLSKKRRR.

This sequence belongs to the bacterial ribosomal protein bL35 family.

The protein is Large ribosomal subunit protein bL35 of Rhodopirellula baltica (strain DSM 10527 / NCIMB 13988 / SH1).